Reading from the N-terminus, the 249-residue chain is MANDPIHQFQVSRWIPIDVGGVDLSFTNVSAFMVATVVLASGFLYLTSSGRGLIPTRLQSVSEMAYEFVATSLRDSAGSKGMKFFPFVFSLFMFVLVANFIGLFPYFYTVTSQIIVTFALSLLVIGTVIFYGFFKHGFGFLKLFVPSGVPGIIVPLVVLIEIISFLSRPISLSVRLFANMLAGHITLKVFAGFVVSLSSLGALGIGGTVLPLLMTVAITALEFLVAFLQAYVFTVLTCMYINDAVHPGH.

Transmembrane regions (helical) follow at residues 26-46 (FTNVSAFMVATVVLASGFLYL), 84-104 (FFPFVFSLFMFVLVANFIGLF), 114-134 (IIVTFALSLLVIGTVIFYGFF), 143-163 (LFVPSGVPGIIVPLVVLIEII), 185-205 (ITLKVFAGFVVSLSSLGALGI), and 208-228 (TVLPLLMTVAITALEFLVAFL).

It belongs to the ATPase A chain family. In terms of assembly, F-type ATPases have 2 components, CF(1) - the catalytic core - and CF(0) - the membrane proton channel. CF(1) has five subunits: alpha(3), beta(3), gamma(1), delta(1), epsilon(1). CF(0) has three main subunits: a(1), b(2) and c(9-12). The alpha and beta chains form an alternating ring which encloses part of the gamma chain. CF(1) is attached to CF(0) by a central stalk formed by the gamma and epsilon chains, while a peripheral stalk is formed by the delta and b chains.

The protein resides in the cell inner membrane. Functionally, key component of the proton channel; it plays a direct role in the translocation of protons across the membrane. This is ATP synthase subunit a from Brucella ovis (strain ATCC 25840 / 63/290 / NCTC 10512).